A 397-amino-acid chain; its full sequence is Elongation factor Tu (397 aa).

Positions 10-206 (KPHVNIGTIG…AVDSYIPTPE (197 aa)) constitute a tr-type G domain. The tract at residues 19–26 (GHVDHGKT) is G1. 19–26 (GHVDHGKT) contacts GTP. Threonine 26 provides a ligand contact to Mg(2+). A G2 region spans residues 60–64 (GITIN). The tract at residues 81–84 (DCPG) is G3. Residues 81–85 (DCPGH) and 136–139 (NKAD) contribute to the GTP site. The interval 136–139 (NKAD) is G4. The G5 stretch occupies residues 174 to 176 (SAL).

The protein belongs to the TRAFAC class translation factor GTPase superfamily. Classic translation factor GTPase family. EF-Tu/EF-1A subfamily. As to quaternary structure, monomer.

It is found in the cytoplasm. It catalyses the reaction GTP + H2O = GDP + phosphate + H(+). In terms of biological role, GTP hydrolase that promotes the GTP-dependent binding of aminoacyl-tRNA to the A-site of ribosomes during protein biosynthesis. The protein is Elongation factor Tu of Clostridium beijerinckii (strain ATCC 51743 / NCIMB 8052) (Clostridium acetobutylicum).